The sequence spans 287 residues: Succinate dehydrogenase [ubiquinone] iron-sulfur subunit, mitochondrial (287 aa).

A mitochondrion-targeting transit peptide spans 1–23 (MISNVLKRASVLARSNGIQSAFY). One can recognise a 2Fe-2S ferredoxin-type domain in the interval 51–140 (FQVYRYNEET…GDTVKVYPLP (90 aa)). [2Fe-2S] cluster contacts are provided by cysteine 101, cysteine 106, cysteine 109, and cysteine 121. The region spanning 186–216 (NRHKLDGLYECILCACCSTSCPSYWWSEGGD) is the 4Fe-4S ferredoxin-type domain. 3 residues coordinate [4Fe-4S] cluster: cysteine 196, cysteine 199, and cysteine 202. Cysteine 206 contacts [3Fe-4S] cluster. Tryptophan 211 serves as a coordination point for a ubiquinone. Residues cysteine 257 and cysteine 263 each coordinate [3Fe-4S] cluster. Position 267 (cysteine 267) interacts with [4Fe-4S] cluster.

This sequence belongs to the succinate dehydrogenase/fumarate reductase iron-sulfur protein family. In terms of assembly, component of complex II composed of four subunits: the flavoprotein (FP) SDHA, iron-sulfur protein (IP) SDHB, and a cytochrome b composed of a large and a small subunit. The cofactor is [2Fe-2S] cluster. It depends on [3Fe-4S] cluster as a cofactor. [4Fe-4S] cluster is required as a cofactor.

The protein resides in the mitochondrion inner membrane. The catalysed reaction is a quinone + succinate = fumarate + a quinol. It functions in the pathway carbohydrate metabolism; tricarboxylic acid cycle; fumarate from succinate (eukaryal route): step 1/1. Iron-sulfur protein (IP) subunit of succinate dehydrogenase (SDH) that is involved in complex II of the mitochondrial electron transport chain and is responsible for transferring electrons from succinate to ubiquinone (coenzyme Q). This Dictyostelium discoideum (Social amoeba) protein is Succinate dehydrogenase [ubiquinone] iron-sulfur subunit, mitochondrial (sdhB).